The primary structure comprises 126 residues: uncharacterized protein (126 aa).

A run of 2 helical transmembrane segments spans residues 40-57 (IDKW…VSFF) and 72-94 (ILIA…ILGG).

The protein localises to the cell membrane. This is an uncharacterized protein from Pasteurella multocida (strain Pm70).